Consider the following 323-residue polypeptide: Beta-ketoacyl-[acyl-carrier-protein] synthase III (323 aa).

Active-site residues include C113 and H250. Residues Q251–R255 form an ACP-binding region. Residue N280 is part of the active site.

The protein belongs to the thiolase-like superfamily. FabH family. In terms of assembly, homodimer.

The protein resides in the cytoplasm. It carries out the reaction malonyl-[ACP] + acetyl-CoA + H(+) = 3-oxobutanoyl-[ACP] + CO2 + CoA. It participates in lipid metabolism; fatty acid biosynthesis. Functionally, catalyzes the condensation reaction of fatty acid synthesis by the addition to an acyl acceptor of two carbons from malonyl-ACP. Catalyzes the first condensation reaction which initiates fatty acid synthesis and may therefore play a role in governing the total rate of fatty acid production. Possesses both acetoacetyl-ACP synthase and acetyl transacylase activities. Its substrate specificity determines the biosynthesis of branched-chain and/or straight-chain of fatty acids. The chain is Beta-ketoacyl-[acyl-carrier-protein] synthase III from Agrobacterium fabrum (strain C58 / ATCC 33970) (Agrobacterium tumefaciens (strain C58)).